Reading from the N-terminus, the 166-residue chain is Ribosome maturation factor RimM (166 aa).

The region spanning 94–165 (EGEYYLGKLI…TIELKVLDLL (72 aa)) is the PRC barrel domain.

This sequence belongs to the RimM family. Binds ribosomal protein uS19.

It localises to the cytoplasm. In terms of biological role, an accessory protein needed during the final step in the assembly of 30S ribosomal subunit, possibly for assembly of the head region. Essential for efficient processing of 16S rRNA. May be needed both before and after RbfA during the maturation of 16S rRNA. It has affinity for free ribosomal 30S subunits but not for 70S ribosomes. The sequence is that of Ribosome maturation factor RimM from Borrelia garinii subsp. bavariensis (strain ATCC BAA-2496 / DSM 23469 / PBi) (Borreliella bavariensis).